Reading from the N-terminus, the 65-residue chain is uncharacterized protein (65 aa).

The segment at 24 to 65 is disordered; the sequence is NNNNNNNNNNNNNNNNNNNNNNNNNNNNNNNKNNKNNNKNND.

This is an uncharacterized protein from Dictyostelium discoideum (Social amoeba).